Consider the following 70-residue polypeptide: MSDSNTGTVKWFNEDKGFGFLTQDNGGADVFVHFRAIASEGFKTLDEGQKVTFEVEQGPKGLQASNVIAL.

The CSD domain occupies G7–V67.

It is found in the cytoplasm. The polypeptide is Cold shock-like protein CspA (cspA) (Shewanella violacea (strain JCM 10179 / CIP 106290 / LMG 19151 / DSS12)).